The primary structure comprises 320 residues: Ferrochelatase (320 aa).

Residues H194 and E275 each coordinate Fe cation.

The protein belongs to the ferrochelatase family.

It localises to the cytoplasm. The catalysed reaction is heme b + 2 H(+) = protoporphyrin IX + Fe(2+). The protein operates within porphyrin-containing compound metabolism; protoheme biosynthesis; protoheme from protoporphyrin-IX: step 1/1. In terms of biological role, catalyzes the ferrous insertion into protoporphyrin IX. This chain is Ferrochelatase, found in Xylella fastidiosa (strain 9a5c).